The chain runs to 151 residues: MKLVIQRVLQAQVYIDDNLFSAIGPGLMLLLGIHHQDNLEQILWSVDKLVHLRIFNDENGKMNRNVKECEGEILVVSQFTLYGNCLNGRRPDFIQAASPPIALSLYRQFIDELKKEAPHVKTGQFGAQMQVSLTNDGPVTFILESLDRRKA.

Residues 137-138 (GP) carry the Gly-cisPro motif, important for rejection of L-amino acids motif.

It belongs to the DTD family. As to quaternary structure, homodimer.

Its subcellular location is the cytoplasm. It catalyses the reaction glycyl-tRNA(Ala) + H2O = tRNA(Ala) + glycine + H(+). The catalysed reaction is a D-aminoacyl-tRNA + H2O = a tRNA + a D-alpha-amino acid + H(+). Functionally, an aminoacyl-tRNA editing enzyme that deacylates mischarged D-aminoacyl-tRNAs. Also deacylates mischarged glycyl-tRNA(Ala), protecting cells against glycine mischarging by AlaRS. Acts via tRNA-based rather than protein-based catalysis; rejects L-amino acids rather than detecting D-amino acids in the active site. By recycling D-aminoacyl-tRNA to D-amino acids and free tRNA molecules, this enzyme counteracts the toxicity associated with the formation of D-aminoacyl-tRNA entities in vivo and helps enforce protein L-homochirality. In Protochlamydia amoebophila (strain UWE25), this protein is D-aminoacyl-tRNA deacylase.